The sequence spans 248 residues: 3-deoxy-manno-octulosonate cytidylyltransferase (248 aa).

Belongs to the KdsB family.

The protein localises to the cytoplasm. The enzyme catalyses 3-deoxy-alpha-D-manno-oct-2-ulosonate + CTP = CMP-3-deoxy-beta-D-manno-octulosonate + diphosphate. Its pathway is nucleotide-sugar biosynthesis; CMP-3-deoxy-D-manno-octulosonate biosynthesis; CMP-3-deoxy-D-manno-octulosonate from 3-deoxy-D-manno-octulosonate and CTP: step 1/1. The protein operates within bacterial outer membrane biogenesis; lipopolysaccharide biosynthesis. Activates KDO (a required 8-carbon sugar) for incorporation into bacterial lipopolysaccharide in Gram-negative bacteria. In Escherichia coli (strain K12 / MC4100 / BW2952), this protein is 3-deoxy-manno-octulosonate cytidylyltransferase.